The following is a 532-amino-acid chain: uncharacterized protein (532 aa).

14 consecutive transmembrane segments (helical) span residues 25–45, 65–85, 109–129, 134–154, 179–199, 203–223, 248–268, 302–322, 344–364, 371–391, 392–412, 425–445, 459–479, and 494–514; these read ITKI…GDVG, SGFP…NHHT, AVPI…QVAA, LFPF…MLPS, KGAS…AGSL, IILG…RQNE, LLLF…SGGE, VPYI…EKIT, KPVN…QVFS, SLAV…FPAI, AVGA…PRYG, AAVA…DKLR, SAVL…TGRG, and AVFI…LNSV.

This sequence belongs to the polysaccharide synthase family.

The protein localises to the cell membrane. This is an uncharacterized protein from Bacillus subtilis (strain 168).